We begin with the raw amino-acid sequence, 295 residues long: Zygote arrest protein 1.S (295 aa).

Disordered stretches follow at residues serine 80 to valine 115 and glutamate 144 to glutamine 186. Residues glutamate 144–lysine 176 show a composition bias toward basic and acidic residues. A 3CxxC-type zinc finger spans residues lysine 197 to glycine 280.

This sequence belongs to the ZAR1 family. As to expression, ovary. Also expressed in lung and muscle.

Its subcellular location is the cytoplasm. The protein resides in the cytoplasmic ribonucleoprotein granule. In terms of biological role, mRNA-binding protein required for maternal mRNA storage, translation and degradation during oocyte maturation. Probably promotes formation of some phase-separated membraneless compartment that stores maternal mRNAs in oocytes: acts by undergoing liquid-liquid phase separation upon binding to maternal mRNAs. Binds to the 3'-UTR of maternal mRNAs in immature oocytes, inhibiting their translation. This chain is Zygote arrest protein 1.S (zar1.S), found in Xenopus laevis (African clawed frog).